Reading from the N-terminus, the 163-residue chain is 16S rRNA aminocarboxypropyltransferase (163 aa).

S-adenosyl-L-methionine is bound by residues Thr-18, Ile-66, Leu-87, and Ser-106.

The protein belongs to the TDD superfamily. TSR3 family.

Its subcellular location is the cytoplasm. It catalyses the reaction an N(1)-methylpseudouridine in rRNA + S-adenosyl-L-methionine = N(1)-methyl-N(3)-[(3S)-3-amino-3-carboxypropyl]pseudouridine in rRNA + S-methyl-5'-thioadenosine + H(+). Functionally, aminocarboxypropyltransferase that catalyzes the aminocarboxypropyl transfer on pseudouridine corresponding to position 914 in M.jannaschii 16S rRNA. It constitutes the last step in biosynthesis of the hypermodified N1-methyl-N3-(3-amino-3-carboxypropyl) pseudouridine (m1acp3-Psi). The sequence is that of 16S rRNA aminocarboxypropyltransferase from Thermoplasma acidophilum (strain ATCC 25905 / DSM 1728 / JCM 9062 / NBRC 15155 / AMRC-C165).